The primary structure comprises 479 residues: ATP synthase subunit beta (479 aa).

153–160 contributes to the ATP binding site; that stretch reads GGAGVGKT.

The protein belongs to the ATPase alpha/beta chains family. F-type ATPases have 2 components, CF(1) - the catalytic core - and CF(0) - the membrane proton channel. CF(1) has five subunits: alpha(3), beta(3), gamma(1), delta(1), epsilon(1). CF(0) has three main subunits: a(1), b(2) and c(9-12). The alpha and beta chains form an alternating ring which encloses part of the gamma chain. CF(1) is attached to CF(0) by a central stalk formed by the gamma and epsilon chains, while a peripheral stalk is formed by the delta and b chains.

The protein localises to the cell membrane. It carries out the reaction ATP + H2O + 4 H(+)(in) = ADP + phosphate + 5 H(+)(out). Increases 2-fold following exposure to low pH. Its function is as follows. Produces ATP from ADP in the presence of a proton gradient across the membrane. The catalytic sites are hosted primarily by the beta subunits. In Lactobacillus acidophilus (strain ATCC 700396 / NCK56 / N2 / NCFM), this protein is ATP synthase subunit beta.